The following is a 95-amino-acid chain: uncharacterized protein (95 aa).

A disordered region spans residues 66 to 95 (EERGRLRGTEGPSRPPSSGAGDPRGATTLG).

It belongs to the herpesviridae UL91 family.

This is an uncharacterized protein from Equine herpesvirus 2 (strain 86/87) (EHV-2).